The primary structure comprises 286 residues: Meteorin-like protein (286 aa).

The signal sequence occupies residues 1–20 (MLRRGLLSFFMVILIDRGTS). Cystine bridges form between cysteine 28–cysteine 51, cysteine 84–cysteine 120, cysteine 165–cysteine 235, cysteine 168–cysteine 259, and cysteine 178–cysteine 281. An N-linked (GlcNAc...) asparagine glycan is attached at asparagine 203.

The protein belongs to the meteorin family.

Its subcellular location is the secreted. In terms of biological role, hormone induced following exercise or cold exposure that promotes energy expenditure. Induced either in the skeletal muscle after exercise or in adipose tissue following cold exposure and is present in the circulation. Able to stimulate energy expenditure associated with the browning of the white fat depots and improves glucose tolerance. The sequence is that of Meteorin-like protein (metrnl) from Xenopus laevis (African clawed frog).